The sequence spans 205 residues: Small ribosomal subunit protein uS2 (205 aa).

The protein belongs to the universal ribosomal protein uS2 family.

The sequence is that of Small ribosomal subunit protein uS2 from Methanoculleus marisnigri (strain ATCC 35101 / DSM 1498 / JR1).